We begin with the raw amino-acid sequence, 528 residues long: Homoserine O-acetyltransferase (528 aa).

Positions 60-245 constitute an AB hydrolase-1 domain; the sequence is LVICHALTGS…AALLTYRSRD (186 aa). Ser-154 serves as the catalytic Nucleophile. Disordered stretches follow at residues 250–335 and 388–413; these read RFGR…VKTQ and DLSA…DATE. Residues 273–282 show a composition bias toward polar residues; that stretch reads QETTDPSVPS. Residues 295 to 304 are compositionally biased toward basic and acidic residues; it reads AWREHNDGHR. Positions 389–409 are enriched in low complexity; that stretch reads LSAPSRDTSLSSLSSGLPSSP. Active-site residues include Asp-438 and His-467.

The protein belongs to the AB hydrolase superfamily. MetX family.

The protein resides in the cytoplasm. The enzyme catalyses L-homoserine + acetyl-CoA = O-acetyl-L-homoserine + CoA. The protein operates within amino-acid biosynthesis; L-methionine biosynthesis via de novo pathway; O-acetyl-L-homoserine from L-homoserine: step 1/1. Its activity is regulated as follows. Inhibited by 6-carbamoyl-3a,4,5,9b-tetrahydro-3H-cyclopenta[ c]quinoline-4-carboxylic acid (CTCQC). In terms of biological role, commits homoserine to the methionine biosynthesis pathway by catalyzing its O-acetylation. This Cryptococcus neoformans var. grubii serotype A (strain H99 / ATCC 208821 / CBS 10515 / FGSC 9487) (Filobasidiella neoformans var. grubii) protein is Homoserine O-acetyltransferase.